A 305-amino-acid chain; its full sequence is tRNA-splicing endonuclease (305 aa).

Active-site residues include Tyr246, His257, and Lys287.

This sequence belongs to the tRNA-intron endonuclease family. Archaeal long subfamily. In terms of assembly, homodimer.

The catalysed reaction is pretRNA = a 3'-half-tRNA molecule with a 5'-OH end + a 5'-half-tRNA molecule with a 2',3'-cyclic phosphate end + an intron with a 2',3'-cyclic phosphate and a 5'-hydroxyl terminus.. Endonuclease that removes tRNA introns. Cleaves pre-tRNA at the 5'- and 3'-splice sites to release the intron. The products are an intron and two tRNA half-molecules bearing 2',3' cyclic phosphate and 5'-OH termini. Recognizes a pseudosymmetric substrate in which 2 bulged loops of 3 bases are separated by a stem of 4 bp. In Archaeoglobus fulgidus (strain ATCC 49558 / DSM 4304 / JCM 9628 / NBRC 100126 / VC-16), this protein is tRNA-splicing endonuclease.